The primary structure comprises 638 residues: Threonine--tRNA ligase (638 aa).

Residues 1–61 (MPNIKLPDGS…ERDSELAILT (61 aa)) form the TGS domain. The tract at residues 242 to 533 (DHRKLGRQLD…LIEHYAGAMP (292 aa)) is catalytic. Zn(2+)-binding residues include Cys-333, His-384, and His-510.

The protein belongs to the class-II aminoacyl-tRNA synthetase family. Homodimer. Zn(2+) serves as cofactor.

The protein resides in the cytoplasm. The catalysed reaction is tRNA(Thr) + L-threonine + ATP = L-threonyl-tRNA(Thr) + AMP + diphosphate + H(+). In terms of biological role, catalyzes the attachment of threonine to tRNA(Thr) in a two-step reaction: L-threonine is first activated by ATP to form Thr-AMP and then transferred to the acceptor end of tRNA(Thr). Also edits incorrectly charged L-seryl-tRNA(Thr). The polypeptide is Threonine--tRNA ligase (Azoarcus sp. (strain BH72)).